Consider the following 189-residue polypeptide: Phosphoheptose isomerase (189 aa).

The 157-residue stretch at 33-189 (CTDTLKAGNK…ELVEREIYGG (157 aa)) folds into the SIS domain. Position 48 to 50 (48 to 50 (NGG)) interacts with substrate. 2 residues coordinate Zn(2+): H57 and E61. Residues E61, 90-91 (ND), 116-118 (STS), S121, and Q168 contribute to the substrate site. Zn(2+)-binding residues include Q168 and H176.

Belongs to the SIS family. GmhA subfamily. Zn(2+) serves as cofactor.

The protein resides in the cytoplasm. It carries out the reaction 2 D-sedoheptulose 7-phosphate = D-glycero-alpha-D-manno-heptose 7-phosphate + D-glycero-beta-D-manno-heptose 7-phosphate. It participates in carbohydrate biosynthesis; D-glycero-D-manno-heptose 7-phosphate biosynthesis; D-glycero-alpha-D-manno-heptose 7-phosphate and D-glycero-beta-D-manno-heptose 7-phosphate from sedoheptulose 7-phosphate: step 1/1. Its function is as follows. Catalyzes the isomerization of sedoheptulose 7-phosphate in D-glycero-D-manno-heptose 7-phosphate. The polypeptide is Phosphoheptose isomerase (Akkermansia muciniphila (strain ATCC BAA-835 / DSM 22959 / JCM 33894 / BCRC 81048 / CCUG 64013 / CIP 107961 / Muc)).